The chain runs to 380 residues: Cytochrome b (380 aa).

4 consecutive transmembrane segments (helical) span residues Phe33–Met53, Trp77–Val98, Trp113–Leu133, and Phe178–Leu198. Residues His83 and His97 each contribute to the heme b site. The heme b site is built by His182 and His196. His201 lines the a ubiquinone pocket. 4 consecutive transmembrane segments (helical) span residues Ile226–Phe246, Leu288–Asn308, Ile320–Gly340, and Phe347–Pro367.

Belongs to the cytochrome b family. The cytochrome bc1 complex contains 11 subunits: 3 respiratory subunits (MT-CYB, CYC1 and UQCRFS1), 2 core proteins (UQCRC1 and UQCRC2) and 6 low-molecular weight proteins (UQCRH/QCR6, UQCRB/QCR7, UQCRQ/QCR8, UQCR10/QCR9, UQCR11/QCR10 and a cleavage product of UQCRFS1). This cytochrome bc1 complex then forms a dimer. It depends on heme b as a cofactor.

It is found in the mitochondrion inner membrane. In terms of biological role, component of the ubiquinol-cytochrome c reductase complex (complex III or cytochrome b-c1 complex) that is part of the mitochondrial respiratory chain. The b-c1 complex mediates electron transfer from ubiquinol to cytochrome c. Contributes to the generation of a proton gradient across the mitochondrial membrane that is then used for ATP synthesis. The polypeptide is Cytochrome b (MT-CYB) (Rhipidomys wetzeli (Wetzel's climbing mouse)).